The following is a 299-amino-acid chain: dTDP-4-dehydrorhamnose reductase (299 aa).

NADH is bound by residues 10–12 (GQV), aspartate 30, 39–40 (DF), and 63–65 (AHT). 11–12 (QV) provides a ligand contact to NADPH. Residues 39–40 (DF), 63–65 (AHT), and tyrosine 102 contribute to the NADPH site. 104-105 (TD) is a binding site for dTDP-beta-L-rhamnose. 2 residues coordinate NADH: tyrosine 128 and lysine 132. Positions 128 and 132 each coordinate NADPH. Tyrosine 128 (proton donor/acceptor) is an active-site residue. Residue tryptophan 153 coordinates dTDP-beta-L-rhamnose.

It belongs to the dTDP-4-dehydrorhamnose reductase family. As to quaternary structure, homodimer. Requires Mg(2+) as cofactor.

It catalyses the reaction dTDP-beta-L-rhamnose + NADP(+) = dTDP-4-dehydro-beta-L-rhamnose + NADPH + H(+). It participates in carbohydrate biosynthesis; dTDP-L-rhamnose biosynthesis. Its pathway is bacterial outer membrane biogenesis; LPS O-antigen biosynthesis. Involved in the biosynthesis of the dTDP-L-rhamnose which is an important component of lipopolysaccharide (LPS). Catalyzes the reduction of dTDP-6-deoxy-L-lyxo-4-hexulose to yield dTDP-L-rhamnose. RmlD uses NADH and NADPH nearly equally well. The sequence is that of dTDP-4-dehydrorhamnose reductase from Escherichia coli (strain K12).